Consider the following 207-residue polypeptide: Uridine kinase (207 aa).

Position 14 to 21 (14 to 21 (GGSGSGKT)) interacts with ATP.

It belongs to the uridine kinase family.

The protein resides in the cytoplasm. The enzyme catalyses uridine + ATP = UMP + ADP + H(+). The catalysed reaction is cytidine + ATP = CMP + ADP + H(+). The protein operates within pyrimidine metabolism; CTP biosynthesis via salvage pathway; CTP from cytidine: step 1/3. It functions in the pathway pyrimidine metabolism; UMP biosynthesis via salvage pathway; UMP from uridine: step 1/1. This Deinococcus deserti (strain DSM 17065 / CIP 109153 / LMG 22923 / VCD115) protein is Uridine kinase.